The primary structure comprises 316 residues: DNA-directed RNA polymerase III subunit RPC6 (316 aa).

The residue at position 2 (Ala2) is an N-acetylalanine. Glycyl lysine isopeptide (Lys-Gly) (interchain with G-Cter in SUMO2) cross-links involve residues Lys5 and Lys7. [4Fe-4S] cluster-binding residues include Cys287, Cys290, Cys296, and Cys307.

This sequence belongs to the eukaryotic RPC34/RPC39 RNA polymerase subunit family. Component of the RNA polymerase III complex consisting of 17 subunits: a ten-subunit horseshoe-shaped catalytic core composed of POLR3A/RPC1, POLR3B/RPC2, POLR1C/RPAC1, POLR1D/RPAC2, POLR3K/RPC10, POLR2E/RPABC1, POLR2F/RPABC2, POLR2H/RPABC3, POLR2K/RPABC4 and POLR2L/RPABC5; a mobile stalk composed of two subunits POLR3H/RPC8 and CRCP/RPC9, protruding from the core and functioning primarily in transcription initiation; and additional subunits homologous to general transcription factors of the RNA polymerase II machinery, POLR3C/RPC3-POLR3F/RPC6-POLR3G/RPC7 heterotrimer required for transcription initiation and POLR3D/RPC4-POLR3E/RPC5 heterodimer involved in both transcription initiation and termination. Directly interacts with POLR3C. Interacts with TBP and TFIIIB90 and GTF3C4. Interacts with MAF1. As part of the RNA polymerase III complex, interacts with PKP2.

It localises to the nucleus. In terms of biological role, DNA-dependent RNA polymerase catalyzes the transcription of DNA into RNA using the four ribonucleoside triphosphates as substrates. Specific peripheric component of RNA polymerase III (Pol III) which synthesizes small non-coding RNAs including 5S rRNA, snRNAs, tRNAs and miRNAs from at least 500 distinct genomic loci. Part of POLR3C/RPC3-POLR3F/RPC6-POLR3G/RPC7 heterotrimer that coordinates the dynamics of Pol III stalk and clamp modules during the transition from apo to elongation state. Pol III plays a key role in sensing and limiting infection by intracellular bacteria and DNA viruses, including varicella zoster virus. Acts as a nuclear and cytosolic DNA sensor detecting AT-rich DNA, involved in innate immune response. Can sense non-self dsDNA that serves as template for transcription into dsRNA. The non-self RNA polymerase III transcripts, such as Epstein-Barr virus-encoded RNAs (EBERs) induce type I interferon and NF-kappa-B through the RIG-I pathway. Preferentially binds double-stranded DNA (dsDNA). The protein is DNA-directed RNA polymerase III subunit RPC6 of Mus musculus (Mouse).